The chain runs to 457 residues: PDZ and LIM domain protein 7 (457 aa).

The region spanning 1–85 (MDSFKVVLEG…RLSLGLSRAQ (85 aa)) is the PDZ domain. Ser-78 bears the Phosphoserine mark. 2 disordered regions span residues 82–166 (SRAQ…QSRS) and 186–226 (FMKK…PWAV). Thr-96 carries the phosphothreonine modification. Residue Arg-103 is modified to Asymmetric dimethylarginine. At Ser-111 the chain carries Phosphoserine. Residues 126–135 (DSTLRQNGQL) are compositionally biased toward polar residues. Basic and acidic residues predominate over residues 144 to 157 (SKQRLMEDTEDWRP). Ser-247 is subject to Phosphoserine. 3 LIM zinc-binding domains span residues 280–338 (PVCH…VRYA), 339–398 (PNCA…MFGT), and 399–457 (KCRG…FSHV).

As to quaternary structure, specifically binds via its LIM zinc-binding 3 domain (LIM 3) domain to endocytic codes of INSR, but not with those of IGF1R, LDLR, TFRC, or EGFR. Interacts with various PKC isoforms through the LIM zinc-binding domains. Binds to RET in a phosphorylation-independent manner via its LIM zinc-binding domain 2 (LIM 2). Probably part of a complex with SHC and the RET dimer. Interacts with TPM2, TBX4 and TBX5.

It localises to the cytoplasm. Its subcellular location is the cytoskeleton. May function as a scaffold on which the coordinated assembly of proteins can occur. May play a role as an adapter that, via its PDZ domain, localizes LIM-binding proteins to actin filaments of both skeletal muscle and nonmuscle tissues. Involved in both of the two fundamental mechanisms of bone formation, direct bone formation (e.g. embryonic flat bones mandible and cranium), and endochondral bone formation (e.g. embryonic long bone development). Plays a role during fracture repair. Involved in BMP6 signaling pathway. The sequence is that of PDZ and LIM domain protein 7 (Pdlim7) from Mus musculus (Mouse).